Consider the following 284-residue polypeptide: Bifunctional protein FolD (284 aa).

Residues 165–167 (GRS) and Ser190 each bind NADP(+).

This sequence belongs to the tetrahydrofolate dehydrogenase/cyclohydrolase family. In terms of assembly, homodimer.

The enzyme catalyses (6R)-5,10-methylene-5,6,7,8-tetrahydrofolate + NADP(+) = (6R)-5,10-methenyltetrahydrofolate + NADPH. It catalyses the reaction (6R)-5,10-methenyltetrahydrofolate + H2O = (6R)-10-formyltetrahydrofolate + H(+). It participates in one-carbon metabolism; tetrahydrofolate interconversion. Its function is as follows. Catalyzes the oxidation of 5,10-methylenetetrahydrofolate to 5,10-methenyltetrahydrofolate and then the hydrolysis of 5,10-methenyltetrahydrofolate to 10-formyltetrahydrofolate. The protein is Bifunctional protein FolD of Streptococcus equi subsp. zooepidemicus (strain MGCS10565).